Here is a 131-residue protein sequence, read N- to C-terminus: Small ribosomal subunit protein uS12 (131 aa).

Residues 1–22 (MPTTQQLLRKGRKVLQKKSKVP) are disordered. The span at 9-20 (RKGRKVLQKKSK) shows a compositional bias: basic residues. Position 89 is a 3-methylthioaspartic acid (Asp89). A disordered region spans residues 102–131 (LDTQGVKDRNKSRSKYGTKKPKAGAAAAKK). The segment covering 113–131 (SRSKYGTKKPKAGAAAAKK) has biased composition (basic residues).

The protein belongs to the universal ribosomal protein uS12 family. Part of the 30S ribosomal subunit. Contacts proteins S8 and S17. May interact with IF1 in the 30S initiation complex.

Its function is as follows. With S4 and S5 plays an important role in translational accuracy. Interacts with and stabilizes bases of the 16S rRNA that are involved in tRNA selection in the A site and with the mRNA backbone. Located at the interface of the 30S and 50S subunits, it traverses the body of the 30S subunit contacting proteins on the other side and probably holding the rRNA structure together. The combined cluster of proteins S8, S12 and S17 appears to hold together the shoulder and platform of the 30S subunit. The chain is Small ribosomal subunit protein uS12 from Deinococcus radiodurans (strain ATCC 13939 / DSM 20539 / JCM 16871 / CCUG 27074 / LMG 4051 / NBRC 15346 / NCIMB 9279 / VKM B-1422 / R1).